The following is a 300-amino-acid chain: B3 domain-containing protein At5g57720 (300 aa).

Residues 11–105 constitute a DNA-binding region (TF-B3); that stretch reads PDFLKIFNSH…SFWVRIHRNG (95 aa). The disordered stretch occupies residues 115-142; the sequence is KIQEISDDEDETNGDGDPHMEEEGDTDE. Acidic residues predominate over residues 119 to 129; sequence ISDDEDETNGD.

Its subcellular location is the nucleus. The protein is B3 domain-containing protein At5g57720 of Arabidopsis thaliana (Mouse-ear cress).